Here is a 149-residue protein sequence, read N- to C-terminus: Glucosamine 6-phosphate N-acetyltransferase (149 aa).

The region spanning 7–149 (YTFRKLKLTD…DGGVEMVCRF (143 aa)) is the N-acetyltransferase domain. Residues T29, 76–79 (KLIH), and 88–90 (EDI) contribute to the substrate site. Acetyl-CoA is bound by residues 90–92 (ISV) and 98–103 (GKKLGY). Substrate is bound by residues 119 to 120 (YK) and D124. Position 133–135 (133–135 (YEK)) interacts with acetyl-CoA. Position 148 (R148) interacts with substrate.

The protein belongs to the acetyltransferase family. GNA1 subfamily.

It carries out the reaction D-glucosamine 6-phosphate + acetyl-CoA = N-acetyl-D-glucosamine 6-phosphate + CoA + H(+). It functions in the pathway nucleotide-sugar biosynthesis; UDP-N-acetyl-alpha-D-glucosamine biosynthesis; N-acetyl-alpha-D-glucosamine 1-phosphate from alpha-D-glucosamine 6-phosphate (route I): step 1/2. This Candida albicans (Yeast) protein is Glucosamine 6-phosphate N-acetyltransferase (GNA1).